The primary structure comprises 919 residues: Coiled-coil domain-containing protein 66 (919 aa).

Disordered regions lie at residues K145 to N166, E456 to E505, E724 to P744, and L762 to H816. Residues Q150–Q161 show a composition bias toward polar residues. A coiled-coil region spans residues H467 to K558. Residues G570–F919 form a mediates localization to cilia, centrosomes and spindle microtubules and the interaction with PCM1, CEP290, CEP104 and CSPP1 region.

In terms of assembly, homodimer; disulfide-linked. Interacts with CEP290. Interacts with PCM1. Interacts with ARMC9, TOGARAM1, CSPP1 and CEP104. Interacts with CDK5RAP2, CEP152, CEP192, TBG1 and PRC1. In terms of tissue distribution, expressed in retina and blood. Expressed in retina, mainly in photoreceptors but also in outer plexiform and ganglion cell layers (at protein level).

The protein localises to the cytoplasm. Its subcellular location is the cytoskeleton. It localises to the microtubule organizing center. It is found in the centrosome. The protein resides in the centriolar satellite. The protein localises to the cell projection. Its subcellular location is the cilium. It localises to the cilium basal body. It is found in the cilium axoneme. The protein resides in the photoreceptor inner segment. The protein localises to the photoreceptor outer segment. In terms of biological role, microtubule-binding protein required for ciliogenesis. May function in ciliogenesis by mediating the transport of proteins like BBS4 to the cilium, but also through the organization of the centriolar satellites. Required for the assembly of signaling-competent cilia with proper structure and length. Mediates this function in part by regulating transition zone assembly and basal body recruitment of the IFT-B complex. Cooperates with the ciliopathy proteins CSPP1 and CEP104 during cilium length regulation. Plays two important roles during cell division. First, is required for mitotic progression via regulation of spindle assembly, organization and orientation, levels of spindle microtubules (MTs), kinetochore-fiber integrity, and chromosome alignment. Second, functions during cytokinesis in part by regulating assembly and organization of central spindle and midbody MTs. Plays a role in retina morphogenesis and/or homeostasis. This chain is Coiled-coil domain-containing protein 66 (CCDC66), found in Canis lupus familiaris (Dog).